The following is a 346-amino-acid chain: S-adenosylmethionine:tRNA ribosyltransferase-isomerase (346 aa).

The protein belongs to the QueA family. As to quaternary structure, monomer.

It localises to the cytoplasm. The catalysed reaction is 7-aminomethyl-7-carbaguanosine(34) in tRNA + S-adenosyl-L-methionine = epoxyqueuosine(34) in tRNA + adenine + L-methionine + 2 H(+). Its pathway is tRNA modification; tRNA-queuosine biosynthesis. Functionally, transfers and isomerizes the ribose moiety from AdoMet to the 7-aminomethyl group of 7-deazaguanine (preQ1-tRNA) to give epoxyqueuosine (oQ-tRNA). In Neisseria meningitidis serogroup C (strain 053442), this protein is S-adenosylmethionine:tRNA ribosyltransferase-isomerase.